Here is a 94-residue protein sequence, read N- to C-terminus: Small ribosomal subunit protein uS19 (94 aa).

Belongs to the universal ribosomal protein uS19 family.

Its function is as follows. Protein S19 forms a complex with S13 that binds strongly to the 16S ribosomal RNA. The sequence is that of Small ribosomal subunit protein uS19 from Elusimicrobium minutum (strain Pei191).